Here is a 741-residue protein sequence, read N- to C-terminus: Phosphoribosylformylglycinamidine synthase subunit PurL (741 aa).

Residue H53 is part of the active site. Positions 56 and 95 each coordinate ATP. A Mg(2+)-binding site is contributed by E97. Substrate-binding positions include 98–101 (SHNH) and R120. H99 functions as the Proton acceptor in the catalytic mechanism. Residue D121 coordinates Mg(2+). Q244 serves as a coordination point for substrate. D274 is a binding site for Mg(2+). 318–320 (ESQ) lines the substrate pocket. ATP contacts are provided by D501 and G538. Residue N539 coordinates Mg(2+). S541 is a substrate binding site.

Belongs to the FGAMS family. In terms of assembly, monomer. Part of the FGAM synthase complex composed of 1 PurL, 1 PurQ and 2 PurS subunits.

It localises to the cytoplasm. It carries out the reaction N(2)-formyl-N(1)-(5-phospho-beta-D-ribosyl)glycinamide + L-glutamine + ATP + H2O = 2-formamido-N(1)-(5-O-phospho-beta-D-ribosyl)acetamidine + L-glutamate + ADP + phosphate + H(+). It functions in the pathway purine metabolism; IMP biosynthesis via de novo pathway; 5-amino-1-(5-phospho-D-ribosyl)imidazole from N(2)-formyl-N(1)-(5-phospho-D-ribosyl)glycinamide: step 1/2. Functionally, part of the phosphoribosylformylglycinamidine synthase complex involved in the purines biosynthetic pathway. Catalyzes the ATP-dependent conversion of formylglycinamide ribonucleotide (FGAR) and glutamine to yield formylglycinamidine ribonucleotide (FGAM) and glutamate. The FGAM synthase complex is composed of three subunits. PurQ produces an ammonia molecule by converting glutamine to glutamate. PurL transfers the ammonia molecule to FGAR to form FGAM in an ATP-dependent manner. PurS interacts with PurQ and PurL and is thought to assist in the transfer of the ammonia molecule from PurQ to PurL. The chain is Phosphoribosylformylglycinamidine synthase subunit PurL from Ligilactobacillus salivarius (strain UCC118) (Lactobacillus salivarius).